The chain runs to 267 residues: Tryptophan synthase alpha chain (267 aa).

Active-site proton acceptor residues include glutamate 43 and aspartate 54.

The protein belongs to the TrpA family. Tetramer of two alpha and two beta chains.

The catalysed reaction is (1S,2R)-1-C-(indol-3-yl)glycerol 3-phosphate + L-serine = D-glyceraldehyde 3-phosphate + L-tryptophan + H2O. The protein operates within amino-acid biosynthesis; L-tryptophan biosynthesis; L-tryptophan from chorismate: step 5/5. Its function is as follows. The alpha subunit is responsible for the aldol cleavage of indoleglycerol phosphate to indole and glyceraldehyde 3-phosphate. The protein is Tryptophan synthase alpha chain of Bacillus subtilis subsp. natto.